Consider the following 399-residue polypeptide: Elongation factor Tu (399 aa).

Residues 10-209 (KPHVNIGTIG…AVDDYIPTPV (200 aa)) form the tr-type G domain. Positions 19–26 (GHVDHGKT) are G1. 19-26 (GHVDHGKT) is a GTP binding site. Thr26 contributes to the Mg(2+) binding site. The G2 stretch occupies residues 62 to 66 (GITIN). Positions 83–86 (DCPG) are G3. GTP is bound by residues 83 to 87 (DCPGH) and 138 to 141 (NKCD). Residues 138-141 (NKCD) form a G4 region. The interval 175 to 177 (SAY) is G5.

This sequence belongs to the TRAFAC class translation factor GTPase superfamily. Classic translation factor GTPase family. EF-Tu/EF-1A subfamily. As to quaternary structure, monomer.

Its subcellular location is the cytoplasm. It carries out the reaction GTP + H2O = GDP + phosphate + H(+). Its function is as follows. GTP hydrolase that promotes the GTP-dependent binding of aminoacyl-tRNA to the A-site of ribosomes during protein biosynthesis. The protein is Elongation factor Tu of Bifidobacterium longum subsp. infantis (strain ATCC 15697 / DSM 20088 / JCM 1222 / NCTC 11817 / S12).